Here is a 287-residue protein sequence, read N- to C-terminus: Energy-coupling factor transporter ATP-binding protein EcfA2 (287 aa).

Positions 3–245 (IKFENVSYVY…SEWLQKHHLA (243 aa)) constitute an ABC transporter domain. 40-47 (GHTGSGKS) contacts ATP.

It belongs to the ABC transporter superfamily. Energy-coupling factor EcfA family. As to quaternary structure, forms a stable energy-coupling factor (ECF) transporter complex composed of 2 membrane-embedded substrate-binding proteins (S component), 2 ATP-binding proteins (A component) and 2 transmembrane proteins (T component).

It is found in the cell membrane. ATP-binding (A) component of a common energy-coupling factor (ECF) ABC-transporter complex. Unlike classic ABC transporters this ECF transporter provides the energy necessary to transport a number of different substrates. The polypeptide is Energy-coupling factor transporter ATP-binding protein EcfA2 (Lactobacillus delbrueckii subsp. bulgaricus (strain ATCC 11842 / DSM 20081 / BCRC 10696 / JCM 1002 / NBRC 13953 / NCIMB 11778 / NCTC 12712 / WDCM 00102 / Lb 14)).